The chain runs to 158 residues: GTP-dependent dephospho-CoA kinase (158 aa).

GTP is bound by residues D35, I36, V37, D54, K56, E109, and D132.

This sequence belongs to the GTP-dependent DPCK family.

It carries out the reaction 3'-dephospho-CoA + GTP = GDP + CoA + H(+). The protein operates within cofactor biosynthesis; coenzyme A biosynthesis. In terms of biological role, catalyzes the GTP-dependent phosphorylation of the 3'-hydroxyl group of dephosphocoenzyme A to form coenzyme A (CoA). The protein is GTP-dependent dephospho-CoA kinase of Methanocaldococcus jannaschii (strain ATCC 43067 / DSM 2661 / JAL-1 / JCM 10045 / NBRC 100440) (Methanococcus jannaschii).